We begin with the raw amino-acid sequence, 112 residues long: Integration host factor subunit alpha (112 aa).

The protein belongs to the bacterial histone-like protein family. As to quaternary structure, heterodimer of an alpha and a beta chain.

Its function is as follows. This protein is one of the two subunits of integration host factor, a specific DNA-binding protein that functions in genetic recombination as well as in transcriptional and translational control. The protein is Integration host factor subunit alpha of Rhizobium leguminosarum bv. trifolii (strain WSM2304).